The following is a 309-amino-acid chain: Histidine protein methyltransferase 1 homolog (309 aa).

2 disordered regions span residues 1–37 (MSFKFNFQVDEDENDNGNNNEQNNEESKLDISEFDSS) and 79–111 (KPFKGNQDNNNDNNVNSNDKNDNNNNNNNNNKD). The segment covering 25–37 (EESKLDISEFDSS) has biased composition (basic and acidic residues). A compositionally biased stretch (low complexity) spans 84 to 109 (NQDNNNDNNVNSNDKNDNNNNNNNNN). Residues 132–136 (LWECS), G159, 179–181 (QDY), 209–211 (GDW), and S229 each bind S-adenosyl-L-methionine.

The protein belongs to the methyltransferase superfamily. METTL18 family.

The protein localises to the cytoplasm. The protein resides in the cytosol. It is found in the nucleus. It localises to the nucleolus. It catalyses the reaction L-histidyl-[protein] + S-adenosyl-L-methionine = N(tele)-methyl-L-histidyl-[protein] + S-adenosyl-L-homocysteine + H(+). Its function is as follows. Protein-L-histidine N-tele-methyltransferase that probably monomethylates RPL3. Through the methylation of RPL3 may regulate the dynamics of pre-rRNA processing, ribosome biogenesis, and translation. The chain is Histidine protein methyltransferase 1 homolog from Dictyostelium discoideum (Social amoeba).